We begin with the raw amino-acid sequence, 226 residues long: ATP synthase F(0) complex subunit a (226 aa).

6 consecutive transmembrane segments (helical) span residues 6-26 (FASFITPTMMGLPIVVTIIMF), 68-88 (WALMIVSLIMFIGSTNLLGLL), 97-117 (QLSMNLSMAIPLWAGAVILGF), 138-158 (IPMLIIIETISLFIQPMALAV), 164-184 (ITAGHLLMHLIGGATLVLMDI), and 189-209 (ATITFIILLLLTVLEFAVALI).

It belongs to the ATPase A chain family. As to quaternary structure, component of the ATP synthase complex composed at least of ATP5F1A/subunit alpha, ATP5F1B/subunit beta, ATP5MC1/subunit c (homooctomer), MT-ATP6/subunit a, MT-ATP8/subunit 8, ATP5ME/subunit e, ATP5MF/subunit f, ATP5MG/subunit g, ATP5MK/subunit k, ATP5MJ/subunit j, ATP5F1C/subunit gamma, ATP5F1D/subunit delta, ATP5F1E/subunit epsilon, ATP5PF/subunit F6, ATP5PB/subunit b, ATP5PD/subunit d, ATP5PO/subunit OSCP. ATP synthase complex consists of a soluble F(1) head domain (subunits alpha(3) and beta(3)) - the catalytic core - and a membrane F(0) domain - the membrane proton channel (subunits c, a, 8, e, f, g, k and j). These two domains are linked by a central stalk (subunits gamma, delta, and epsilon) rotating inside the F1 region and a stationary peripheral stalk (subunits F6, b, d, and OSCP). Interacts with DNAJC30; interaction is direct.

Its subcellular location is the mitochondrion inner membrane. It carries out the reaction H(+)(in) = H(+)(out). Subunit a, of the mitochondrial membrane ATP synthase complex (F(1)F(0) ATP synthase or Complex V) that produces ATP from ADP in the presence of a proton gradient across the membrane which is generated by electron transport complexes of the respiratory chain. ATP synthase complex consist of a soluble F(1) head domain - the catalytic core - and a membrane F(1) domain - the membrane proton channel. These two domains are linked by a central stalk rotating inside the F(1) region and a stationary peripheral stalk. During catalysis, ATP synthesis in the catalytic domain of F(1) is coupled via a rotary mechanism of the central stalk subunits to proton translocation. With the subunit c (ATP5MC1), forms the proton-conducting channel in the F(0) domain, that contains two crucial half-channels (inlet and outlet) that facilitate proton movement from the mitochondrial intermembrane space (IMS) into the matrix. Protons are taken up via the inlet half-channel and released through the outlet half-channel, following a Grotthuss mechanism. This chain is ATP synthase F(0) complex subunit a, found in Rattus norvegicus (Rat).